Here is a 491-residue protein sequence, read N- to C-terminus: MDSHEVLLAATYLLGTLAAFCLGQSGRGFVGAQVMLSGSNSKCQGLVEVQMNGMKTVCSSSWRLSQDLWKNANEASTVCQQLGCGNPLALGHLTLWNRPKNQILCQGPPWSFSNCSTSSLGQCLPLSLVCLEPQKTTPLPTTTLPTTMPEPTAPPRLQLVPGHEGLRCTGVVEFYNGSRGGTILYKAKARPVDLGNLICKSLQCGSFLTHLSRIETAGTPAPAELRDPRPLPIRWEAQNGSCTSLQQCFQKTTVQEGSQALAVVCSDFQPKVQSRLVGGSSVCEGIAEVRQRSQWAALCDSSAARGPGRWEELCQEQQCGNLISFHVMDADRTSPGVLCTQEKLSQCYQLQKKTHCKRVFITCKDPNPVGLAPGTVASIILTLVLLVVLMVMCGPLIYKKLVKKFRQKKQRQWIGPTGVNQSMSFHRSHTATVRSQVENPAASHVDNEYSQPPRNSRLSAYPALEGALHRSSTQPDNSSDSDYDLQVAQRL.

An N-terminal signal peptide occupies residues 1–23 (MDSHEVLLAATYLLGTLAAFCLG). Topologically, residues 25–368 (SGRGFVGAQV…VFITCKDPNP (344 aa)) are extracellular. 3 SRCR domains span residues 34-131 (VMLS…LVCL), 157-266 (LQLV…VVCS), and 274-364 (SRLV…ITCK). 4 disulfides stabilise this stretch: Cys43/Cys84, Cys58/Cys123, Cys79/Cys130, and Cys105/Cys115. 3 N-linked (GlcNAc...) asparagine glycosylation sites follow: Asn114, Asn176, and Asn239. 6 disulfide bridges follow: Cys199–Cys265, Cys242–Cys248, Cys283–Cys319, Cys299–Cys356, Cys314–Cys363, and Cys339–Cys347. A helical transmembrane segment spans residues 369-398 (VGLAPGTVASIILTLVLLVVLMVMCGPLIY). The Cytoplasmic portion of the chain corresponds to 399–491 (KKLVKKFRQK…DYDLQVAQRL (93 aa)). Ser435 bears the Phosphoserine mark. Tyr449 is subject to Phosphotyrosine. 3 positions are modified to phosphoserine: Ser456, Ser479, and Ser481. The interval 467 to 491 (ALHRSSTQPDNSSDSDYDLQVAQRL) is disordered. A compositionally biased stretch (polar residues) spans 470–480 (RSSTQPDNSSD).

Interacts with CD72/LYB-2. Interacts with PTPN6/SHP-1. Interacts with CBL. Interacts with CD5L. Post-translationally, phosphorylated on serine, threonine and tyrosine residues following TCR stimulation. Phosphorylated by LCK on Tyr-449 and Tyr-483 upon TCR engagement.

The protein resides in the cell membrane. In terms of biological role, lymphoid-specific receptor expressed by all T-cells and in a subset of B-cells known as B1a cells. Plays a role in the regulation of TCR and BCR signaling, thymocyte selection, T-cell effector differentiation and immune tolerance. Acts by interacting with several ligands expressed on B-cells such as CD5L or CD72 and thereby plays an important role in contact-mediated, T-dependent B-cell activation and in the maintenance of regulatory T and B-cell homeostasis. Functions as a negative regulator of TCR signaling during thymocyte development by associating with several signaling proteins including LCK, CD3Z chain, PI3K or CBL. Mechanistically, co-engagement of CD3 with CD5 enhances phosphorylated CBL recruitment leading to increased VAV1 phosphorylation and degradation. Modulates B-cell biology through ERK1/2 activation in a Ca(2+)-dependent pathway via the non-selective Ca(2+) channel TRPC1, leading to IL-10 production. This chain is T-cell surface glycoprotein CD5 (Cd5), found in Rattus norvegicus (Rat).